Consider the following 213-residue polypeptide: Nucleolar protein 12 (213 aa).

Residues 33–96 adopt a coiled-coil conformation; it reads GFHKRKVERK…RLVTAKTESV (64 aa). Residues 118–213 are disordered; sequence ARLLGLTPPE…LTGKARHSGE (96 aa). Composition is skewed to basic residues over residues 170–182 and 198–213; these read AHSR…KHPR and KAQR…HSGE.

The protein belongs to the RRP17 family. Interacts with KIAA1191.

Its subcellular location is the nucleus. It localises to the nucleolus. The protein resides in the cytoplasm. In terms of biological role, multifunctional RNA binding protein that plays a role in RNA metabolism and DNA maintenance. Participates in the resolution of DNA stress and the maintenance of genome integrity by localizing to sites of DNA insults. Also plays a role in proper nucleolar organization by limiting nucleolar size and regulating nucleolar number. Mechanistically, regulates the nucleolar levels of fibrillarin and nucleolin, two key players in pre-rRNA processing and ribosome assembly. The protein is Nucleolar protein 12 (NOL12) of Homo sapiens (Human).